Consider the following 444-residue polypeptide: ATP-dependent protease ATPase subunit HslU (444 aa).

Residues isoleucine 20, 62-67 (GVGKTE), aspartate 257, glutamate 322, and arginine 394 each bind ATP.

This sequence belongs to the ClpX chaperone family. HslU subfamily. In terms of assembly, a double ring-shaped homohexamer of HslV is capped on each side by a ring-shaped HslU homohexamer. The assembly of the HslU/HslV complex is dependent on binding of ATP.

The protein resides in the cytoplasm. Functionally, ATPase subunit of a proteasome-like degradation complex; this subunit has chaperone activity. The binding of ATP and its subsequent hydrolysis by HslU are essential for unfolding of protein substrates subsequently hydrolyzed by HslV. HslU recognizes the N-terminal part of its protein substrates and unfolds these before they are guided to HslV for hydrolysis. In Bordetella avium (strain 197N), this protein is ATP-dependent protease ATPase subunit HslU.